Here is a 564-residue protein sequence, read N- to C-terminus: Oxalyl-CoA decarboxylase (564 aa).

Residues isoleucine 32 and tyrosine 118 each contribute to the substrate site. Arginine 158 and lysine 220 together coordinate ADP. Residue 261–265 participates in substrate binding; sequence AAARS. The ADP site is built by arginine 280, aspartate 302, and isoleucine 322. Asparagine 355 is a binding site for substrate. Thiamine diphosphate-binding positions include tyrosine 372 and 396–398; that span reads ANT. 403-404 is a binding site for substrate; the sequence is RN. Position 421-423 (421-423) interacts with thiamine diphosphate; it reads GVM. Aspartate 447 is a Mg(2+) binding site. Position 448 to 449 (448 to 449) interacts with thiamine diphosphate; sequence SA. Positions 474 and 476 each coordinate Mg(2+). Tyrosine 478 is a binding site for thiamine diphosphate. 550-552 is a binding site for substrate; that stretch reads SGH.

The protein belongs to the TPP enzyme family. As to quaternary structure, homotetramer; dimer of dimers. Requires Mg(2+) as cofactor. Thiamine diphosphate serves as cofactor.

The catalysed reaction is oxalyl-CoA + H(+) = formyl-CoA + CO2. Its pathway is metabolic intermediate degradation; oxalate degradation; CO(2) and formate from oxalate: step 2/2. Functionally, involved in the catabolism of oxalate and in the adapatation to low pH via the induction of the oxalate-dependent acid tolerance response (ATR). Catalyzes the decarboxylation of oxalyl-CoA to yield carbon dioxide and formyl-CoA. This chain is Oxalyl-CoA decarboxylase (oxc), found in Escherichia coli O157:H7.